The following is a 324-amino-acid chain: Beta-ketoacyl-[acyl-carrier-protein] synthase III (324 aa).

Catalysis depends on residues Cys-112 and His-251. The tract at residues 252–256 (QANIR) is ACP-binding. The active site involves Asn-281.

Belongs to the thiolase-like superfamily. FabH family. As to quaternary structure, homodimer.

Its subcellular location is the cytoplasm. The enzyme catalyses malonyl-[ACP] + acetyl-CoA + H(+) = 3-oxobutanoyl-[ACP] + CO2 + CoA. It participates in lipid metabolism; fatty acid biosynthesis. Catalyzes the condensation reaction of fatty acid synthesis by the addition to an acyl acceptor of two carbons from malonyl-ACP. Catalyzes the first condensation reaction which initiates fatty acid synthesis and may therefore play a role in governing the total rate of fatty acid production. Possesses both acetoacetyl-ACP synthase and acetyl transacylase activities. Its substrate specificity determines the biosynthesis of branched-chain and/or straight-chain of fatty acids. The polypeptide is Beta-ketoacyl-[acyl-carrier-protein] synthase III (Desulfotalea psychrophila (strain LSv54 / DSM 12343)).